Consider the following 570-residue polypeptide: Proline--tRNA ligase (570 aa).

Belongs to the class-II aminoacyl-tRNA synthetase family. ProS type 1 subfamily. Homodimer.

The protein resides in the cytoplasm. The catalysed reaction is tRNA(Pro) + L-proline + ATP = L-prolyl-tRNA(Pro) + AMP + diphosphate. In terms of biological role, catalyzes the attachment of proline to tRNA(Pro) in a two-step reaction: proline is first activated by ATP to form Pro-AMP and then transferred to the acceptor end of tRNA(Pro). As ProRS can inadvertently accommodate and process non-cognate amino acids such as alanine and cysteine, to avoid such errors it has two additional distinct editing activities against alanine. One activity is designated as 'pretransfer' editing and involves the tRNA(Pro)-independent hydrolysis of activated Ala-AMP. The other activity is designated 'posttransfer' editing and involves deacylation of mischarged Ala-tRNA(Pro). The misacylated Cys-tRNA(Pro) is not edited by ProRS. This is Proline--tRNA ligase from Desulfotalea psychrophila (strain LSv54 / DSM 12343).